Consider the following 432-residue polypeptide: Adenylosuccinate synthetase (432 aa).

Residues 13 to 19 (GDEGKGK) and 41 to 43 (GHT) contribute to the GTP site. Residue D14 is the Proton acceptor of the active site. Mg(2+) contacts are provided by D14 and G41. IMP-binding positions include 14–17 (DEGK), 39–42 (NAGH), T131, R145, Q226, T241, and R305. Residue H42 is the Proton donor of the active site. 301–307 (SVTGRAR) lines the substrate pocket. Residues R307, 333–335 (KLD), and 416–418 (STG) contribute to the GTP site.

It belongs to the adenylosuccinate synthetase family. Homodimer. The cofactor is Mg(2+).

Its subcellular location is the cytoplasm. The catalysed reaction is IMP + L-aspartate + GTP = N(6)-(1,2-dicarboxyethyl)-AMP + GDP + phosphate + 2 H(+). It functions in the pathway purine metabolism; AMP biosynthesis via de novo pathway; AMP from IMP: step 1/2. In terms of biological role, plays an important role in the de novo pathway of purine nucleotide biosynthesis. Catalyzes the first committed step in the biosynthesis of AMP from IMP. This Neisseria meningitidis serogroup B (strain ATCC BAA-335 / MC58) protein is Adenylosuccinate synthetase.